The primary structure comprises 299 residues: Putative KilA-N domain-containing protein R879 (299 aa).

Residues 1-75 (MKSDNGILMS…IKVSEIVLSY (75 aa)) form the KilA-N domain. Residues 76–150 (HAKEAIKEKE…DKKINELLSK (75 aa)) are a coiled coil.

This Acanthamoeba polyphaga mimivirus (APMV) protein is Putative KilA-N domain-containing protein R879.